Reading from the N-terminus, the 218-residue chain is Cytochrome c biogenesis ATP-binding export protein CcmA (218 aa).

One can recognise an ABC transporter domain in the interval 12–217 (LHAEQLSSIR…KLSLEYRGEV (206 aa)). 44–51 (GPNGAGKS) is a binding site for ATP.

It belongs to the ABC transporter superfamily. CcmA exporter (TC 3.A.1.107) family. In terms of assembly, the complex is composed of two ATP-binding proteins (CcmA) and two transmembrane proteins (CcmB).

Its subcellular location is the cell inner membrane. The catalysed reaction is heme b(in) + ATP + H2O = heme b(out) + ADP + phosphate + H(+). Its function is as follows. Part of the ABC transporter complex CcmAB involved in the biogenesis of c-type cytochromes; once thought to export heme, this seems not to be the case, but its exact role is uncertain. Responsible for energy coupling to the transport system. The protein is Cytochrome c biogenesis ATP-binding export protein CcmA of Idiomarina loihiensis (strain ATCC BAA-735 / DSM 15497 / L2-TR).